Consider the following 129-residue polypeptide: Small ribosomal subunit protein uS11 (129 aa).

This sequence belongs to the universal ribosomal protein uS11 family. Part of the 30S ribosomal subunit. Interacts with proteins S7 and S18. Binds to IF-3.

Functionally, located on the platform of the 30S subunit, it bridges several disparate RNA helices of the 16S rRNA. Forms part of the Shine-Dalgarno cleft in the 70S ribosome. The sequence is that of Small ribosomal subunit protein uS11 from Agrobacterium fabrum (strain C58 / ATCC 33970) (Agrobacterium tumefaciens (strain C58)).